Reading from the N-terminus, the 457-residue chain is tRNA-2-methylthio-N(6)-dimethylallyladenosine synthase (457 aa).

The 118-residue stretch at 3 to 120 (KKVYVKTFGC…LPQMIDKRRE (118 aa)) folds into the MTTase N-terminal domain. 6 residues coordinate [4Fe-4S] cluster: Cys12, Cys49, Cys83, Cys157, Cys161, and Cys164. In terms of domain architecture, Radical SAM core spans 143–377 (RVDGPSAFVS…QATIEENVQR (235 aa)). The TRAM domain maps to 380-447 (DSMVGKIERI…PHSLRGELVL (68 aa)).

Belongs to the methylthiotransferase family. MiaB subfamily. Monomer. [4Fe-4S] cluster is required as a cofactor.

The protein resides in the cytoplasm. The enzyme catalyses N(6)-dimethylallyladenosine(37) in tRNA + (sulfur carrier)-SH + AH2 + 2 S-adenosyl-L-methionine = 2-methylsulfanyl-N(6)-dimethylallyladenosine(37) in tRNA + (sulfur carrier)-H + 5'-deoxyadenosine + L-methionine + A + S-adenosyl-L-homocysteine + 2 H(+). Catalyzes the methylthiolation of N6-(dimethylallyl)adenosine (i(6)A), leading to the formation of 2-methylthio-N6-(dimethylallyl)adenosine (ms(2)i(6)A) at position 37 in tRNAs that read codons beginning with uridine. The polypeptide is tRNA-2-methylthio-N(6)-dimethylallyladenosine synthase (Paraburkholderia xenovorans (strain LB400)).